The chain runs to 304 residues: N-acetylmuramic acid 6-phosphate etherase (304 aa).

An SIS domain is found at 57–220 (AVKGLSAGGR…STATMVGLGK (164 aa)). Glu85 functions as the Proton donor in the catalytic mechanism. The active site involves Glu116.

Belongs to the GCKR-like family. MurNAc-6-P etherase subfamily. In terms of assembly, homodimer.

It catalyses the reaction N-acetyl-D-muramate 6-phosphate + H2O = N-acetyl-D-glucosamine 6-phosphate + (R)-lactate. It functions in the pathway amino-sugar metabolism; N-acetylmuramate degradation. In terms of biological role, specifically catalyzes the cleavage of the D-lactyl ether substituent of MurNAc 6-phosphate, producing GlcNAc 6-phosphate and D-lactate. The polypeptide is N-acetylmuramic acid 6-phosphate etherase (Cutibacterium acnes (strain DSM 16379 / KPA171202) (Propionibacterium acnes)).